The primary structure comprises 473 residues: Zinc finger and SCAN domain-containing protein 21 (473 aa).

Lysine 27 is covalently cross-linked (Glycyl lysine isopeptide (Lys-Gly) (interchain with G-Cter in SUMO2)). The SCAN box domain occupies 45 to 127 (RQRFRQFGYH…TLLEDLEREL (83 aa)). Positions 127–169 (LDEPGHQVSTPPNEQKPVWEKISSSGTAKESPSSMQPQPLETS) are disordered. A compositionally biased stretch (polar residues) spans 148 to 167 (ISSSGTAKESPSSMQPQPLE). Glycyl lysine isopeptide (Lys-Gly) (interchain with G-Cter in SUMO2) cross-links involve residues lysine 221 and lysine 232. The disordered stretch occupies residues 244 to 272 (LENEKGTKPPLQEAGSKKGRESVPTKPTP). Basic and acidic residues predominate over residues 258-272 (GSKKGRESVPTKPTP). C2H2-type zinc fingers lie at residues 277 to 299 (YICA…RRTH), 305 to 327 (YVCT…YRTH), 333 to 354 (YDCK…QRMH), 360 to 382 (YQCK…YRIH), 388 to 410 (YQCN…QRLH), 416 to 438 (YKCK…HRIH), and 444 to 466 (YWCH…QRVH). A Glycyl lysine isopeptide (Lys-Gly) (interchain with G-Cter in SUMO2) cross-link involves residue lysine 349.

Belongs to the krueppel C2H2-type zinc-finger protein family.

It localises to the nucleus. Strong transcriptional activator. Plays an important role in spermatogenesis; essential for the progression of meiotic prophase I in spermatocytes. This chain is Zinc finger and SCAN domain-containing protein 21 (ZSCAN21), found in Homo sapiens (Human).